The primary structure comprises 260 residues: Ribosomal RNA small subunit methyltransferase G (260 aa).

S-adenosyl-L-methionine contacts are provided by residues Gly94, Phe99, 117-119 (DSS), 145-146 (AE), and Arg164.

The protein belongs to the methyltransferase superfamily. RNA methyltransferase RsmG family.

Its subcellular location is the cytoplasm. Functionally, specifically methylates the N7 position of a guanine in 16S rRNA. The protein is Ribosomal RNA small subunit methyltransferase G of Synechococcus sp. (strain JA-3-3Ab) (Cyanobacteria bacterium Yellowstone A-Prime).